A 435-amino-acid chain; its full sequence is DMATS-type prenyltransferase fscG (435 aa).

Arg111, Lys193, Tyr195, Arg259, Lys261, Tyr263, Tyr352, and Tyr423 together coordinate dimethylallyl diphosphate.

Belongs to the tryptophan dimethylallyltransferase family.

The protein operates within secondary metabolite biosynthesis. Its function is as follows. DMATS-type prenyltransferase; part of the fragmented gene cluster that mediates the biosynthesis of fusarochromene, a tryptophan-derived metabolite closely related to a group of mycotoxins including fusarochromanone. Within the pathway, fscG catalyzes the prenylation of the primary alcohol produced by fscA which is necessary for the formation of the chromene ring by the oxidoreductase fscI. The first step of the pathway is the epimerization of L-tryptophan to D-tryptophan in the presence of the NRPS-like tryptophan epimerase fscC. D-tryptophan is subsequently hydroxylated by the tryptophan 6-hydroxylase fscE to yield 6-hydroxytryptophan. The pyrrole ring undergoes cleavaged by the tryptophan 2,3-dioxygenase fscD and is finally converted to 4-hydroxykyrunenine by the hydrolase fscH. The NRPS-like oxidoreductase fscA reduces the carboxyl group to primary alcohol and the DMATS-type prenyltransferase fscG performs prenylation, followed by the formation of a chromene ring catalyzed by the oxidoreductase fscI, which leads to desacetylfusarochromene. Epoxidation by fscF and rearrangement reactions of chromene double bonds convert compound desacetylfusarochromene to fusarochromanones. Although specific acetyltransferases were not found near the fsc gene cluster, several predicted enzymes containing the N-acetyltransferase superfamily domain are present in the genome of F.equiseti. These predicted enzymes may have the potential to convert desacetylfusarochromene to fusarochromene. The protein is DMATS-type prenyltransferase fscG of Fusarium equiseti (Fusarium scirpi).